A 546-amino-acid polypeptide reads, in one-letter code: Histidine--tRNA ligase, mitochondrial (546 aa).

Residues 1 to 20 (MLSRSLNKVVTSIKSSSIIR) constitute a mitochondrion transit peptide. Residues 129–131 (DLT), arginine 156, glutamine 172, aspartate 176, arginine 326, and 330–331 (YY) contribute to the L-histidine site.

Belongs to the class-II aminoacyl-tRNA synthetase family.

The protein localises to the cytoplasm. It is found in the mitochondrion. It catalyses the reaction tRNA(His) + L-histidine + ATP = L-histidyl-tRNA(His) + AMP + diphosphate + H(+). Its function is as follows. Catalyzes the aminoacylation of histidyl-tRNA in both the cytoplasm and the mitochondrion. This is Histidine--tRNA ligase, mitochondrial (HTS1) from Saccharomyces cerevisiae (strain ATCC 204508 / S288c) (Baker's yeast).